Consider the following 208-residue polypeptide: Orotidine 5'-phosphate decarboxylase (208 aa).

Substrate-binding positions include Asp-7, Lys-29, 57-66 (DLKLADIPNT), Ser-109, 162-172 (PGIGAQGGKAK), Gly-185, and Arg-186. Lys-59 functions as the Proton donor in the catalytic mechanism.

This sequence belongs to the OMP decarboxylase family. Type 1 subfamily. Homodimer.

The enzyme catalyses orotidine 5'-phosphate + H(+) = UMP + CO2. It participates in pyrimidine metabolism; UMP biosynthesis via de novo pathway; UMP from orotate: step 2/2. Catalyzes the decarboxylation of orotidine 5'-monophosphate (OMP) to uridine 5'-monophosphate (UMP). This chain is Orotidine 5'-phosphate decarboxylase (pyrF), found in Pyrococcus horikoshii (strain ATCC 700860 / DSM 12428 / JCM 9974 / NBRC 100139 / OT-3).